Here is a 162-residue protein sequence, read N- to C-terminus: Xanthine-guanine phosphoribosyltransferase (162 aa).

5-phospho-alpha-D-ribose 1-diphosphate is bound by residues 43–44 (RG) and 94–102 (DDLVDTGTT). Asp95 serves as a coordination point for Mg(2+). Residues Asp98 and Ile141 each contribute to the guanine site. The xanthine site is built by Asp98 and Ile141. GMP contacts are provided by residues 98–102 (DTGTT) and 140–141 (WI).

It belongs to the purine/pyrimidine phosphoribosyltransferase family. XGPT subfamily. Homotetramer. It depends on Mg(2+) as a cofactor.

It localises to the cell inner membrane. It catalyses the reaction GMP + diphosphate = guanine + 5-phospho-alpha-D-ribose 1-diphosphate. It carries out the reaction XMP + diphosphate = xanthine + 5-phospho-alpha-D-ribose 1-diphosphate. The catalysed reaction is IMP + diphosphate = hypoxanthine + 5-phospho-alpha-D-ribose 1-diphosphate. Its pathway is purine metabolism; GMP biosynthesis via salvage pathway; GMP from guanine: step 1/1. The protein operates within purine metabolism; XMP biosynthesis via salvage pathway; XMP from xanthine: step 1/1. Purine salvage pathway enzyme that catalyzes the transfer of the ribosyl-5-phosphate group from 5-phospho-alpha-D-ribose 1-diphosphate (PRPP) to the N9 position of the 6-oxopurines guanine and xanthine to form the corresponding ribonucleotides GMP (guanosine 5'-monophosphate) and XMP (xanthosine 5'-monophosphate), with the release of PPi. To a lesser extent, also acts on hypoxanthine. The sequence is that of Xanthine-guanine phosphoribosyltransferase from Oleidesulfovibrio alaskensis (strain ATCC BAA-1058 / DSM 17464 / G20) (Desulfovibrio alaskensis).